A 369-amino-acid chain; its full sequence is Dual-specificity RNA methyltransferase RlmN (369 aa).

Glu94 serves as the catalytic Proton acceptor. Residues 113–346 (ESEKWTMCLS…CTIRESRGID (234 aa)) form the Radical SAM core domain. Cys120 and Cys351 are disulfide-bonded. Cys127, Cys131, and Cys134 together coordinate [4Fe-4S] cluster. Residues 177–178 (GE), Ser209, 232–234 (SLH), and Asn308 contribute to the S-adenosyl-L-methionine site. Catalysis depends on Cys351, which acts as the S-methylcysteine intermediate.

The protein belongs to the radical SAM superfamily. RlmN family. [4Fe-4S] cluster is required as a cofactor.

It is found in the cytoplasm. The catalysed reaction is adenosine(2503) in 23S rRNA + 2 reduced [2Fe-2S]-[ferredoxin] + 2 S-adenosyl-L-methionine = 2-methyladenosine(2503) in 23S rRNA + 5'-deoxyadenosine + L-methionine + 2 oxidized [2Fe-2S]-[ferredoxin] + S-adenosyl-L-homocysteine. It carries out the reaction adenosine(37) in tRNA + 2 reduced [2Fe-2S]-[ferredoxin] + 2 S-adenosyl-L-methionine = 2-methyladenosine(37) in tRNA + 5'-deoxyadenosine + L-methionine + 2 oxidized [2Fe-2S]-[ferredoxin] + S-adenosyl-L-homocysteine. Specifically methylates position 2 of adenine 2503 in 23S rRNA and position 2 of adenine 37 in tRNAs. m2A2503 modification seems to play a crucial role in the proofreading step occurring at the peptidyl transferase center and thus would serve to optimize ribosomal fidelity. This is Dual-specificity RNA methyltransferase RlmN from Helicobacter hepaticus (strain ATCC 51449 / 3B1).